Here is a 742-residue protein sequence, read N- to C-terminus: 5-methyltetrahydropteroyltriglutamate--homocysteine methyltransferase (742 aa).

Residues 18–21 and Lys112 contribute to the 5-methyltetrahydropteroyltri-L-glutamate site; that span reads REWK. L-homocysteine-binding positions include 420–422 and Glu473; that span reads IGS. L-methionine-binding positions include 420–422 and Glu473; that span reads IGS. Trp550 is a binding site for 5-methyltetrahydropteroyltri-L-glutamate. Asp588 serves as a coordination point for L-homocysteine. Asp588 contributes to the L-methionine binding site. Position 594 (Glu594) interacts with 5-methyltetrahydropteroyltri-L-glutamate. Zn(2+) contacts are provided by His630, Cys632, and Glu654. His683 functions as the Proton donor in the catalytic mechanism. Cys715 is a binding site for Zn(2+).

The protein belongs to the vitamin-B12 independent methionine synthase family. It depends on Zn(2+) as a cofactor.

The catalysed reaction is 5-methyltetrahydropteroyltri-L-glutamate + L-homocysteine = tetrahydropteroyltri-L-glutamate + L-methionine. It participates in amino-acid biosynthesis; L-methionine biosynthesis via de novo pathway; L-methionine from L-homocysteine (MetE route): step 1/1. Functionally, catalyzes the transfer of a methyl group from 5-methyltetrahydrofolate to homocysteine resulting in methionine formation. This Staphylococcus aureus (strain JH9) protein is 5-methyltetrahydropteroyltriglutamate--homocysteine methyltransferase.